Here is a 164-residue protein sequence, read N- to C-terminus: Interleukin-31 (164 aa).

The N-terminal stretch at 1–23 is a signal peptide; it reads MASHSGPSTSVLFLFCCLGGWLA. Asparagine 67 and asparagine 100 each carry an N-linked (GlcNAc...) asparagine glycan.

As to expression, detected at low levels in testis, bone marrow, skeletal muscle, kidney, colon, thymus, small intestine and trachea.

It localises to the secreted. In terms of biological role, activates STAT3 and possibly STAT1 and STAT5 through the IL31 heterodimeric receptor composed of IL31RA and OSMR. May function in skin immunity. Enhances myeloid progenitor cell survival in vitro. Induces RETNLA and serum amyloid A protein expression in macrophages. The polypeptide is Interleukin-31 (IL31) (Homo sapiens (Human)).